Here is a 182-residue protein sequence, read N- to C-terminus: Large ribosomal subunit protein uL5 (182 aa).

It belongs to the universal ribosomal protein uL5 family. In terms of assembly, part of the 50S ribosomal subunit; part of the 5S rRNA/L5/L18/L25 subcomplex. Contacts the 5S rRNA and the P site tRNA. Forms a bridge to the 30S subunit in the 70S ribosome.

Functionally, this is one of the proteins that bind and probably mediate the attachment of the 5S RNA into the large ribosomal subunit, where it forms part of the central protuberance. In the 70S ribosome it contacts protein S13 of the 30S subunit (bridge B1b), connecting the 2 subunits; this bridge is implicated in subunit movement. Contacts the P site tRNA; the 5S rRNA and some of its associated proteins might help stabilize positioning of ribosome-bound tRNAs. The chain is Large ribosomal subunit protein uL5 from Borreliella burgdorferi (strain ATCC 35210 / DSM 4680 / CIP 102532 / B31) (Borrelia burgdorferi).